Here is a 293-residue protein sequence, read N- to C-terminus: 4-hydroxy-tetrahydrodipicolinate synthase (293 aa).

Thr45 contacts pyruvate. Tyr133 serves as the catalytic Proton donor/acceptor. Lys162 acts as the Schiff-base intermediate with substrate in catalysis. Ile204 is a binding site for pyruvate.

This sequence belongs to the DapA family. In terms of assembly, homotetramer; dimer of dimers.

The protein resides in the cytoplasm. It carries out the reaction L-aspartate 4-semialdehyde + pyruvate = (2S,4S)-4-hydroxy-2,3,4,5-tetrahydrodipicolinate + H2O + H(+). Its pathway is amino-acid biosynthesis; L-lysine biosynthesis via DAP pathway; (S)-tetrahydrodipicolinate from L-aspartate: step 3/4. In terms of biological role, catalyzes the condensation of (S)-aspartate-beta-semialdehyde [(S)-ASA] and pyruvate to 4-hydroxy-tetrahydrodipicolinate (HTPA). The polypeptide is 4-hydroxy-tetrahydrodipicolinate synthase (Brucella abortus biovar 1 (strain 9-941)).